The following is a 406-amino-acid chain: Tryptophan 2,3-dioxygenase (406 aa).

Substrate-binding positions include 72-76 (FIVTH) and arginine 144. Histidine 328 is a heme binding site. Position 342 (threonine 342) interacts with substrate.

It belongs to the tryptophan 2,3-dioxygenase family. As to quaternary structure, homotetramer. Dimer of dimers. It depends on heme as a cofactor.

The catalysed reaction is L-tryptophan + O2 = N-formyl-L-kynurenine. The protein operates within amino-acid degradation; L-tryptophan degradation via kynurenine pathway; L-kynurenine from L-tryptophan: step 1/2. Heme-dependent dioxygenase that catalyzes the oxidative cleavage of the L-tryptophan (L-Trp) pyrrole ring and converts L-tryptophan to N-formyl-L-kynurenine. Catalyzes the oxidative cleavage of the indole moiety. This Xenopus tropicalis (Western clawed frog) protein is Tryptophan 2,3-dioxygenase.